Reading from the N-terminus, the 188-residue chain is Large ribosomal subunit protein eL18 (188 aa).

Lysine 119 is covalently cross-linked (Glycyl lysine isopeptide (Lys-Gly) (interchain with G-Cter in SUMO2)). Residue serine 130 is modified to Phosphoserine. Residues 151–188 are disordered; sequence HFGKAPGTPHSHTKPYVRSKGRKFERARGRRASRGYKN. A Phosphothreonine modification is found at threonine 158. 2 stretches are compositionally biased toward basic residues: residues 161-171 and 178-188; these read SHTKPYVRSKG and RGRRASRGYKN. Residue lysine 164 forms a Glycyl lysine isopeptide (Lys-Gly) (interchain with G-Cter in SUMO2) linkage.

Belongs to the eukaryotic ribosomal protein eL18 family. As to quaternary structure, component of the large ribosomal subunit.

It is found in the cytoplasm. The protein resides in the cytosol. The protein localises to the rough endoplasmic reticulum. Functionally, component of the large ribosomal subunit. The ribosome is a large ribonucleoprotein complex responsible for the synthesis of proteins in the cell. This chain is Large ribosomal subunit protein eL18 (RPL18), found in Homo sapiens (Human).